Consider the following 168-residue polypeptide: MISVIGIDPGSRNTGWGIVHEVSGVLHLVCCGVIQPSCNGSFAERLAHIFQEISSIIMKYKPVEASVEQVFTAQNPLTALKLGQARGAAVVACANQGLLIKDYEATTIKKTLVGHGRATKEQVSFMVGRSLGVKPDWPIDTSDALATAICHLTIRRFENRTARVAKTL.

Catalysis depends on residues Asp-8, Glu-68, and Asp-140. Residues Asp-8, Glu-68, and Asp-140 each contribute to the Mg(2+) site.

It belongs to the RuvC family. As to quaternary structure, homodimer which binds Holliday junction (HJ) DNA. The HJ becomes 2-fold symmetrical on binding to RuvC with unstacked arms; it has a different conformation from HJ DNA in complex with RuvA. In the full resolvosome a probable DNA-RuvA(4)-RuvB(12)-RuvC(2) complex forms which resolves the HJ. Requires Mg(2+) as cofactor.

The protein localises to the cytoplasm. It carries out the reaction Endonucleolytic cleavage at a junction such as a reciprocal single-stranded crossover between two homologous DNA duplexes (Holliday junction).. The RuvA-RuvB-RuvC complex processes Holliday junction (HJ) DNA during genetic recombination and DNA repair. Endonuclease that resolves HJ intermediates. Cleaves cruciform DNA by making single-stranded nicks across the HJ at symmetrical positions within the homologous arms, yielding a 5'-phosphate and a 3'-hydroxyl group; requires a central core of homology in the junction. The consensus cleavage sequence is 5'-(A/T)TT(C/G)-3'. Cleavage occurs on the 3'-side of the TT dinucleotide at the point of strand exchange. HJ branch migration catalyzed by RuvA-RuvB allows RuvC to scan DNA until it finds its consensus sequence, where it cleaves and resolves the cruciform DNA. The chain is Crossover junction endodeoxyribonuclease RuvC from Lawsonia intracellularis (strain PHE/MN1-00).